The sequence spans 96 residues: MASIKPLGDRVLVEPRQEAEEKIGSIFVPDTAKEKPQEGKVVEIGSGKYEDGKLIPLEVKVGDTVLYGKYSGTEIKSEGKEYLIIRESDILAVVKK.

The protein belongs to the GroES chaperonin family. As to quaternary structure, heptamer of 7 subunits arranged in a ring. Interacts with the chaperonin GroEL.

The protein resides in the cytoplasm. In terms of biological role, together with the chaperonin GroEL, plays an essential role in assisting protein folding. The GroEL-GroES system forms a nano-cage that allows encapsulation of the non-native substrate proteins and provides a physical environment optimized to promote and accelerate protein folding. GroES binds to the apical surface of the GroEL ring, thereby capping the opening of the GroEL channel. The polypeptide is Co-chaperonin GroES (Leptospira interrogans serogroup Icterohaemorrhagiae serovar copenhageni (strain Fiocruz L1-130)).